The primary structure comprises 124 residues: Small ribosomal subunit protein uS12 (124 aa).

The tract at residues 1–23 (MATINQLVRKPRVRQKQKSNVPA) is disordered. Aspartate 89 is modified (3-methylthioaspartic acid). The disordered stretch occupies residues 103-124 (DTAGVGDRRQGRSKYGAKRPKG). Positions 113-124 (GRSKYGAKRPKG) are enriched in basic residues.

This sequence belongs to the universal ribosomal protein uS12 family. Part of the 30S ribosomal subunit. Contacts proteins S8 and S17. May interact with IF1 in the 30S initiation complex.

Its function is as follows. With S4 and S5 plays an important role in translational accuracy. Functionally, interacts with and stabilizes bases of the 16S rRNA that are involved in tRNA selection in the A site and with the mRNA backbone. Located at the interface of the 30S and 50S subunits, it traverses the body of the 30S subunit contacting proteins on the other side and probably holding the rRNA structure together. The combined cluster of proteins S8, S12 and S17 appears to hold together the shoulder and platform of the 30S subunit. This is Small ribosomal subunit protein uS12 from Nitrosococcus oceani (strain ATCC 19707 / BCRC 17464 / JCM 30415 / NCIMB 11848 / C-107).